Consider the following 307-residue polypeptide: tRNA pseudouridine synthase B (307 aa).

Residue Asp-38 is the Nucleophile of the active site.

The protein belongs to the pseudouridine synthase TruB family. Type 1 subfamily.

The catalysed reaction is uridine(55) in tRNA = pseudouridine(55) in tRNA. In terms of biological role, responsible for synthesis of pseudouridine from uracil-55 in the psi GC loop of transfer RNAs. This chain is tRNA pseudouridine synthase B, found in Bacillus cereus (strain ZK / E33L).